We begin with the raw amino-acid sequence, 268 residues long: Interleukin-2 receptor subunit alpha (268 aa).

The N-terminal stretch at 1-21 (MEPRLLMLGFLSLTIVPSCRA) is a signal peptide. The Sushi 1 domain maps to 22–79 (ELCLYDPPEVPNATFKALSYKNGTILNCECKRGFRRLKELVYMRCLGNSWSSNCQCTS). Over 22–236 (ELCLYDPPEV…ETFVLTMEYK (215 aa)) the chain is Extracellular. Cystine bridges form between C24/C66, C49/C75, and C51/C77. N33 and N43 each carry an N-linked (GlcNAc...) asparagine glycan. A disordered region spans residues 86–109 (RKQVTAQLEHQKEQQTTTDMQKPT). Residues 88-109 (QVTAQLEHQKEQQTTTDMQKPT) are compositionally biased toward polar residues. N-linked (GlcNAc...) asparagine glycosylation is present at N116. The region spanning 119-182 (GHCREPPPWK…WTQPQLTCVD (64 aa)) is the Sushi 2 domain. 2 disulfides stabilise this stretch: C121/C164 and C148/C180. Residues 189 to 219 (FLASEESQGSRNSSPESETSCPITTTDFPQP) are disordered. Polar residues predominate over residues 193-211 (EESQGSRNSSPESETSCPI). Residues 237–257 (VAVASCLFLLISILLLSGLTW) form a helical membrane-spanning segment. Residues 258-268 (QHRWRKSRRTI) are Cytoplasmic-facing.

As to quaternary structure, non-covalent dimer of an alpha and a beta subunit. IL2R exists in 3 different forms: a high affinity dimer, an intermediate affinity monomer (beta subunit), and a low affinity monomer (alpha subunit). The high and intermediate affinity forms also associate with a gamma subunit.

Its subcellular location is the membrane. Receptor for interleukin-2. The receptor is involved in the regulation of immune tolerance by controlling regulatory T cells (TREGs) activity. TREGs suppress the activation and expansion of autoreactive T-cells. The protein is Interleukin-2 receptor subunit alpha (Il2ra) of Mus musculus (Mouse).